Here is a 310-residue protein sequence, read N- to C-terminus: Glutarate 2-hydroxylase (310 aa).

Histidine 160, aspartate 162, and histidine 277 together coordinate Fe cation.

This sequence belongs to the glutarate hydroxylase family. Homotetramer. Requires Fe(2+) as cofactor.

The catalysed reaction is glutarate + 2-oxoglutarate + O2 = (S)-2-hydroxyglutarate + succinate + CO2. The protein operates within amino-acid degradation. Functionally, acts as an alpha-ketoglutarate-dependent dioxygenase catalyzing hydroxylation of glutarate (GA) to L-2-hydroxyglutarate (L2HG). Functions in a L-lysine degradation pathway that proceeds via cadaverine, glutarate and L-2-hydroxyglutarate. This is Glutarate 2-hydroxylase from Shigella flexneri.